Reading from the N-terminus, the 20-residue chain is Alpha-conotoxin-like ts14a (20 aa).

2 disulfides stabilise this stretch: cysteine 3/cysteine 16 and cysteine 14/cysteine 20.

As to expression, expressed by the venom duct.

The protein localises to the secreted. Its function is as follows. Alpha-conotoxins act on postsynaptic membranes, they bind to the nicotinic acetylcholine receptors (nAChR) and thus inhibit them. This chain is Alpha-conotoxin-like ts14a, found in Conus tessulatus (Tessellate cone).